Consider the following 209-residue polypeptide: Large ribosomal subunit protein uL3 (209 aa).

The protein belongs to the universal ribosomal protein uL3 family. As to quaternary structure, part of the 50S ribosomal subunit. Forms a cluster with proteins L14 and L19.

Its function is as follows. One of the primary rRNA binding proteins, it binds directly near the 3'-end of the 23S rRNA, where it nucleates assembly of the 50S subunit. This Clostridium botulinum (strain Okra / Type B1) protein is Large ribosomal subunit protein uL3.